Here is a 1503-residue protein sequence, read N- to C-terminus: Rho GTPase-activating protein 5 (1503 aa).

FF domains follow at residues 267–325 (QLVV…HIEQ), 366–420 (KLME…HVQH), 427–481 (RIEM…HQRE), and 482–548 (IVEK…HIGF). Position 550 is a 3'-nitrotyrosine (Y550). A phosphoserine mark is found at S590 and S765. The pG1 pseudoGTPase domain maps to 590–763 (STNIDKVNLF…LESVKHNLDV (174 aa)). One can recognise a pG2 pseudoGTPase domain in the interval 779–944 (RIVMCAMCGD…FSDVLEKKNM (166 aa)). Phosphoserine is present on residues S951 and S968. Disordered regions lie at residues 975-1004 (YNNY…LPTP), 1022-1050 (HSTP…PKTN), and 1069-1091 (NPRK…SDNY). The span at 1036–1045 (VPPPIKPKPV) shows a compositional bias: pro residues. Residue S1115 is modified to Phosphoserine. Disordered stretches follow at residues 1129–1157 (NTQG…YKYK) and 1169–1255 (YRRT…TRRN). The segment covering 1141–1151 (RTSKGHGERRP) has biased composition (basic and acidic residues). A phosphoserine mark is found at S1196, S1203, and S1219. Residues 1263-1450 (MPLQDLVTAE…TFIQQCQFFF (188 aa)) form the Rho-GAP domain.

May interact with RASA1/p120GAP. As to expression, expressed in spinal cord, cerebellum, kidney, testis and lung.

The protein localises to the cytoplasm. The protein resides in the cell membrane. GTPase-activating protein for Rho family members. The sequence is that of Rho GTPase-activating protein 5 (Arhgap5) from Mus musculus (Mouse).